A 279-amino-acid chain; its full sequence is Pleckstrin homology domain-containing family F member 1 (279 aa).

Residues 35–131 (VLLGEGVLTK…WISHIEECVR (97 aa)) enclose the PH domain. An FYVE-type zinc finger spans residues 152–212 (DKATDICMRC…VCSLCYRELA (61 aa)). Residues Cys-158, Cys-161, Cys-175, Cys-178, Cys-183, Cys-186, Cys-204, and Cys-207 each coordinate Zn(2+). A disordered region spans residues 220-263 (AREGIGGSPPQLSHLGGTVCGASSGDDDDSDEDREGNGDGDWPT). The span at 244–253 (GDDDDSDEDR) shows a compositional bias: acidic residues.

As to expression, widely expressed.

It localises to the nucleus. It is found in the cytoplasm. The protein localises to the perinuclear region. The protein resides in the lysosome. Its function is as follows. May induce apoptosis through the lysosomal-mitochondrial pathway. Translocates to the lysosome initiating the permeabilization of lysosomal membrane (LMP) and resulting in the release of CTSD and CTSL to the cytoplasm. Triggers the caspase-independent apoptosis by altering mitochondrial membrane permeabilization (MMP) resulting in the release of PDCD8. The chain is Pleckstrin homology domain-containing family F member 1 (Plekhf1) from Mus musculus (Mouse).